A 454-amino-acid chain; its full sequence is Ribosomal protein uS12 methylthiotransferase RimO (454 aa).

The MTTase N-terminal domain maps to 14-125; the sequence is SKIAFSHVGC…IAKVLDRVEK (112 aa). [4Fe-4S] cluster is bound by residues Cys23, Cys59, Cys88, Cys163, Cys167, and Cys170. Residues 149 to 378 enclose the Radical SAM core domain; that stretch reads DKNKFVAYLR…ISVQQNISRE (230 aa). The TRAM domain maps to 381-452; the sequence is QIYVGSKMKI…EYDLYGETIK (72 aa).

This sequence belongs to the methylthiotransferase family. RimO subfamily. It depends on [4Fe-4S] cluster as a cofactor.

Its subcellular location is the cytoplasm. The catalysed reaction is L-aspartate(89)-[ribosomal protein uS12]-hydrogen + (sulfur carrier)-SH + AH2 + 2 S-adenosyl-L-methionine = 3-methylsulfanyl-L-aspartate(89)-[ribosomal protein uS12]-hydrogen + (sulfur carrier)-H + 5'-deoxyadenosine + L-methionine + A + S-adenosyl-L-homocysteine + 2 H(+). Its function is as follows. Catalyzes the methylthiolation of an aspartic acid residue of ribosomal protein uS12. This Prochlorococcus marinus (strain MIT 9301) protein is Ribosomal protein uS12 methylthiotransferase RimO.